A 500-amino-acid chain; its full sequence is MIKVIVPDFSDKKFSDRWRYCVGTGRLGLALQKEYIDTLKYVKENIDFKYIRGHGLLCDDVGIYREDVVGDEIKPFYNFTYIDRIFDSFLEIGIRPFVEIGFMPKRLASGTQAVFYWEGNVTPPKDYKKWENLIKAVVSHFISRYGIDEVAKWPFEIWNEPNLKEFWKDADEKEYFKLYKITAKAIKEVNENIKVGGPAICGGADYWIEDFLNFCYEENVPVDFVSRHAYTSKQGEYTPHLIYQEIMPSEYMLNEFKTVRDIIKNSHFPNLPFHITEYNTSYSPQNPVHDTPFNAAYIARILSEGGDYVDSFSYWTFSDVFEERDVPRSQFHGGFGLVALNMVPKPTFYTFKFFNAMGEEMLYRDEHMIVTRRDDGSVALIAWNEVMDKTENPDKEYEVQIPVGFKDVFIKRQLIDEEHGNPWGTWIHMGRPRYPSKKEINTLREIAKPEIMTSHAVTNDGYLNLKFKLAKNAVVLYELTERIDESSTYIGLDDSKINGY.

The active-site Proton donor is the Glu-160. Glu-277 (nucleophile) is an active-site residue.

The protein belongs to the glycosyl hydrolase 39 family.

The catalysed reaction is Hydrolysis of (1-&gt;4)-beta-D-xylans, to remove successive D-xylose residues from the non-reducing termini.. The protein is Beta-xylosidase (xynB) of Thermoanaerobacterium saccharolyticum (strain DSM 8691 / JW/SL-YS485).